The sequence spans 265 residues: Phosphatidylserine decarboxylase proenzyme (265 aa).

Catalysis depends on charge relay system; for autoendoproteolytic cleavage activity residues aspartate 86, histidine 142, and serine 226. Catalysis depends on serine 226, which acts as the Schiff-base intermediate with substrate; via pyruvic acid; for decarboxylase activity. Position 226 is a pyruvic acid (Ser); by autocatalysis (serine 226).

This sequence belongs to the phosphatidylserine decarboxylase family. PSD-B subfamily. Prokaryotic type I sub-subfamily. In terms of assembly, heterodimer of a large membrane-associated beta subunit and a small pyruvoyl-containing alpha subunit. The cofactor is pyruvate. Post-translationally, is synthesized initially as an inactive proenzyme. Formation of the active enzyme involves a self-maturation process in which the active site pyruvoyl group is generated from an internal serine residue via an autocatalytic post-translational modification. Two non-identical subunits are generated from the proenzyme in this reaction, and the pyruvate is formed at the N-terminus of the alpha chain, which is derived from the carboxyl end of the proenzyme. The autoendoproteolytic cleavage occurs by a canonical serine protease mechanism, in which the side chain hydroxyl group of the serine supplies its oxygen atom to form the C-terminus of the beta chain, while the remainder of the serine residue undergoes an oxidative deamination to produce ammonia and the pyruvoyl prosthetic group on the alpha chain. During this reaction, the Ser that is part of the protease active site of the proenzyme becomes the pyruvoyl prosthetic group, which constitutes an essential element of the active site of the mature decarboxylase.

The protein localises to the cell membrane. The enzyme catalyses a 1,2-diacyl-sn-glycero-3-phospho-L-serine + H(+) = a 1,2-diacyl-sn-glycero-3-phosphoethanolamine + CO2. The protein operates within phospholipid metabolism; phosphatidylethanolamine biosynthesis; phosphatidylethanolamine from CDP-diacylglycerol: step 2/2. In terms of biological role, catalyzes the formation of phosphatidylethanolamine (PtdEtn) from phosphatidylserine (PtdSer). This Anoxybacillus flavithermus (strain DSM 21510 / WK1) protein is Phosphatidylserine decarboxylase proenzyme.